A 322-amino-acid chain; its full sequence is N-acetyl-gamma-glutamyl-phosphate reductase (322 aa).

C132 is a catalytic residue.

The protein belongs to the NAGSA dehydrogenase family. Type 1 subfamily.

The protein localises to the cytoplasm. The enzyme catalyses N-acetyl-L-glutamate 5-semialdehyde + phosphate + NADP(+) = N-acetyl-L-glutamyl 5-phosphate + NADPH + H(+). Its pathway is amino-acid biosynthesis; L-arginine biosynthesis; N(2)-acetyl-L-ornithine from L-glutamate: step 3/4. Its function is as follows. Catalyzes the NADPH-dependent reduction of N-acetyl-5-glutamyl phosphate to yield N-acetyl-L-glutamate 5-semialdehyde. The protein is N-acetyl-gamma-glutamyl-phosphate reductase of Bacteroides thetaiotaomicron (strain ATCC 29148 / DSM 2079 / JCM 5827 / CCUG 10774 / NCTC 10582 / VPI-5482 / E50).